We begin with the raw amino-acid sequence, 216 residues long: FGFR1 oncogene partner 2 homolog (216 aa).

2 coiled-coil regions span residues 33–102 (TTTL…LIMS) and 131–185 (SKEL…ITRA). The segment at 193-216 (EDAAESSSHSASSVPNTDLSLRKS) is disordered. Positions 206–216 (VPNTDLSLRKS) are enriched in polar residues.

It belongs to the SIKE family.

Its subcellular location is the cytoplasm. This chain is FGFR1 oncogene partner 2 homolog (fgfr1op2), found in Xenopus tropicalis (Western clawed frog).